Reading from the N-terminus, the 301-residue chain is tRNA pseudouridine synthase B (301 aa).

Asp-45 (nucleophile) is an active-site residue.

Belongs to the pseudouridine synthase TruB family. Type 1 subfamily.

It catalyses the reaction uridine(55) in tRNA = pseudouridine(55) in tRNA. Responsible for synthesis of pseudouridine from uracil-55 in the psi GC loop of transfer RNAs. In Streptomyces avermitilis (strain ATCC 31267 / DSM 46492 / JCM 5070 / NBRC 14893 / NCIMB 12804 / NRRL 8165 / MA-4680), this protein is tRNA pseudouridine synthase B.